We begin with the raw amino-acid sequence, 684 residues long: MTGARNWLNKPLIFFKFNNHHTASPGDKMVKYVAFFEELGKDDVGIAGGKGANLGELTQAGIPVPPGFVVTAATYDKFMTDTGLQPVVMEMLENLDVNDTKELQRVSAEIKDIITSTEVPEDIQTLIIESYNALCQRIGKDDVYVAIRSSATAEDLPEASFAGQQDTFLNIRGAEDVLDYVRRCWASLFEARAIFYREENNFDHSKVYIAVVVQEMVDAEKAGVMFTVHPSTGEDRILIEGSWGLGEAVVSGSVTPDTYWVDKGTGKLLEFTVGEKNIMFTREDGRTVKKEVPPELRNKRVLSDGEIAALAEMGRRIQDHYGSPQDTEWAIMDGDVYMLQSRPITTLGEATEETEVKSREILVKGLGASPGLASGRVKIIREIHELDKIQIGDILVTVMTTPDMVPAMKRASGIITDEGGVTCHAAIVSRELGIPCVVGTGNATEVLKENQVVSIDGNRGLVYEGSVIEGEKKEAEAETVTVESPLLTVTEVKVNVSMPEAARKAAATGADGVGLLRTEHMMLTTGVHPRKFIEEGREDELVNTLAENILKVADEFYPRPVWYRTLDAPTDEFKTLEGGENEPYEHNPMLGWRGIRRELDEPEILRAEFRAIKKLHEQGYTNIGIMIPLVQHPDELRKAKMIAEEAGLKPHRDVEFGIMVETPAAALIIEDFIEEGIDFVRLEP.

The active-site Tele-phosphohistidine intermediate is the H424. Positions 517, 564, and 661 each coordinate substrate. A Mg(2+)-binding site is contributed by E661.

It belongs to the PEP-utilizing enzyme family. Requires Mg(2+) as cofactor.

It catalyses the reaction pyruvate + ATP + H2O = phosphoenolpyruvate + AMP + phosphate + 2 H(+). The protein operates within carbohydrate biosynthesis; gluconeogenesis. In terms of biological role, catalyzes the phosphorylation of pyruvate to phosphoenolpyruvate. This is Probable phosphoenolpyruvate synthase (ppsA) from Methanothermobacter thermautotrophicus (strain ATCC 29096 / DSM 1053 / JCM 10044 / NBRC 100330 / Delta H) (Methanobacterium thermoautotrophicum).